The chain runs to 558 residues: uncharacterized protein (558 aa).

Residues 47 to 78 adopt a coiled-coil conformation; the sequence is DFDDLNSIFKDFQKQKKNLKDNILKFYNKKKE. Disordered regions lie at residues 239 to 266 and 424 to 447; these read NNNNIKTETESEIESKSESESESESKIE and NNNNNNNNNNNNNNNNNNNNNSGE. Positions 245–266 are enriched in basic and acidic residues; it reads TETESEIESKSESESESESKIE. Residues 424–444 are compositionally biased toward low complexity; the sequence is NNNNNNNNNNNNNNNNNNNNN.

This is an uncharacterized protein from Dictyostelium discoideum (Social amoeba).